Consider the following 256-residue polypeptide: 5'-nucleotidase SurE (256 aa).

The a divalent metal cation site is built by aspartate 9, aspartate 10, serine 42, and asparagine 99.

The protein belongs to the SurE nucleotidase family. It depends on a divalent metal cation as a cofactor.

Its subcellular location is the cytoplasm. The enzyme catalyses a ribonucleoside 5'-phosphate + H2O = a ribonucleoside + phosphate. In terms of biological role, nucleotidase that shows phosphatase activity on nucleoside 5'-monophosphates. The chain is 5'-nucleotidase SurE from Symbiobacterium thermophilum (strain DSM 24528 / JCM 14929 / IAM 14863 / T).